Here is a 763-residue protein sequence, read N- to C-terminus: Long-chain-fatty-acid--CoA ligase ACSBG2 (763 aa).

The tract at residues 47–78 is disordered; it reads CSMKPADDPKTERSQMNKTGLASSSRPASNVW. The segment covering 51–61 has biased composition (basic and acidic residues); it reads PADDPKTERSQ. Polar residues predominate over residues 62 to 78; sequence MNKTGLASSSRPASNVW. ATP is bound by residues 281-289, 472-477, D550, R565, and K678; these read TSGTTGQPK and ELYGMS.

Belongs to the ATP-dependent AMP-binding enzyme family. Bubblegum subfamily.

It is found in the cytoplasm. The catalysed reaction is a long-chain fatty acid + ATP + CoA = a long-chain fatty acyl-CoA + AMP + diphosphate. The enzyme catalyses (5Z,8Z,11Z,14Z)-eicosatetraenoate + ATP + CoA = (5Z,8Z,11Z,14Z)-eicosatetraenoyl-CoA + AMP + diphosphate. It carries out the reaction hexadecanoate + ATP + CoA = hexadecanoyl-CoA + AMP + diphosphate. It catalyses the reaction (9Z)-octadecenoate + ATP + CoA = (9Z)-octadecenoyl-CoA + AMP + diphosphate. The catalysed reaction is (9Z,12Z)-octadecadienoate + ATP + CoA = (9Z,12Z)-octadecadienoyl-CoA + AMP + diphosphate. The enzyme catalyses tetracosanoate + ATP + CoA = tetracosanoyl-CoA + AMP + diphosphate. Mediates activation of long-chain fatty acids for both synthesis of cellular lipids, and degradation via beta-oxidation. Its function is as follows. Catalyzes the conversion of fatty acids such as long chain and very long-chain fatty acids to their active form acyl-CoAs for both synthesis of cellular lipids, and degradation via beta-oxidation. Can activate diverse saturated, monosaturated and polyunsaturated fatty acids. The sequence is that of Long-chain-fatty-acid--CoA ligase ACSBG2 from Gallus gallus (Chicken).